The sequence spans 440 residues: UDP-N-acetylmuramoylalanine--D-glutamate ligase (440 aa).

115–121 (GSNGKST) provides a ligand contact to ATP.

The protein belongs to the MurCDEF family.

It localises to the cytoplasm. It carries out the reaction UDP-N-acetyl-alpha-D-muramoyl-L-alanine + D-glutamate + ATP = UDP-N-acetyl-alpha-D-muramoyl-L-alanyl-D-glutamate + ADP + phosphate + H(+). It functions in the pathway cell wall biogenesis; peptidoglycan biosynthesis. In terms of biological role, cell wall formation. Catalyzes the addition of glutamate to the nucleotide precursor UDP-N-acetylmuramoyl-L-alanine (UMA). In Aliivibrio fischeri (strain MJ11) (Vibrio fischeri), this protein is UDP-N-acetylmuramoylalanine--D-glutamate ligase.